Here is a 38-residue protein sequence, read N- to C-terminus: MKKVTSLKKRSDNCKIVKRKGCLRIINKLNPKFKQKQG.

This sequence belongs to the bacterial ribosomal protein bL36 family.

In Karelsulcia muelleri (strain GWSS) (Sulcia muelleri), this protein is Large ribosomal subunit protein bL36.